We begin with the raw amino-acid sequence, 153 residues long: Large ribosomal subunit protein uL30 (153 aa).

This sequence belongs to the universal ribosomal protein uL30 family. As to quaternary structure, part of the 50S ribosomal subunit.

The chain is Large ribosomal subunit protein uL30 from Methanosarcina barkeri (strain Fusaro / DSM 804).